Here is a 173-residue protein sequence, read N- to C-terminus: Crossover junction endodeoxyribonuclease RuvC (173 aa).

Residues aspartate 8, glutamate 69, and aspartate 141 contribute to the active site. Aspartate 8, glutamate 69, and aspartate 141 together coordinate Mg(2+).

It belongs to the RuvC family. Homodimer which binds Holliday junction (HJ) DNA. The HJ becomes 2-fold symmetrical on binding to RuvC with unstacked arms; it has a different conformation from HJ DNA in complex with RuvA. In the full resolvosome a probable DNA-RuvA(4)-RuvB(12)-RuvC(2) complex forms which resolves the HJ. The cofactor is Mg(2+).

Its subcellular location is the cytoplasm. The enzyme catalyses Endonucleolytic cleavage at a junction such as a reciprocal single-stranded crossover between two homologous DNA duplexes (Holliday junction).. The RuvA-RuvB-RuvC complex processes Holliday junction (HJ) DNA during genetic recombination and DNA repair. Endonuclease that resolves HJ intermediates. Cleaves cruciform DNA by making single-stranded nicks across the HJ at symmetrical positions within the homologous arms, yielding a 5'-phosphate and a 3'-hydroxyl group; requires a central core of homology in the junction. The consensus cleavage sequence is 5'-(A/T)TT(C/G)-3'. Cleavage occurs on the 3'-side of the TT dinucleotide at the point of strand exchange. HJ branch migration catalyzed by RuvA-RuvB allows RuvC to scan DNA until it finds its consensus sequence, where it cleaves and resolves the cruciform DNA. In Stenotrophomonas maltophilia (strain R551-3), this protein is Crossover junction endodeoxyribonuclease RuvC.